Consider the following 176-residue polypeptide: Ribosome rescue factor SmrB (176 aa).

The Smr domain maps to 93–168; sequence LDLHGYRQSE…GDAALLVLID (76 aa).

Belongs to the SmrB family. As to quaternary structure, associates with collided ribosomes, but not with correctly translating polysomes.

Acts as a ribosome collision sensor. Detects stalled/collided disomes (pairs of ribosomes where the leading ribosome is stalled and a second ribosome has collided with it) and endonucleolytically cleaves mRNA at the 5' boundary of the stalled ribosome. Stalled/collided disomes form a new interface (primarily via the 30S subunits) that binds SmrB. Cleaved mRNA becomes available for tmRNA ligation, leading to ribosomal subunit dissociation and rescue of stalled ribosomes. This chain is Ribosome rescue factor SmrB, found in Shewanella sp. (strain MR-4).